We begin with the raw amino-acid sequence, 421 residues long: Gamma-glutamyl phosphate reductase (421 aa).

The protein belongs to the gamma-glutamyl phosphate reductase family.

It localises to the cytoplasm. It catalyses the reaction L-glutamate 5-semialdehyde + phosphate + NADP(+) = L-glutamyl 5-phosphate + NADPH + H(+). The protein operates within amino-acid biosynthesis; L-proline biosynthesis; L-glutamate 5-semialdehyde from L-glutamate: step 2/2. In terms of biological role, catalyzes the NADPH-dependent reduction of L-glutamate 5-phosphate into L-glutamate 5-semialdehyde and phosphate. The product spontaneously undergoes cyclization to form 1-pyrroline-5-carboxylate. The sequence is that of Gamma-glutamyl phosphate reductase from Stutzerimonas stutzeri (strain A1501) (Pseudomonas stutzeri).